The following is a 1123-amino-acid chain: Eukaryotic translation initiation factor 2-alpha kinase PK4 (1123 aa).

The disordered stretch occupies residues 1–30 (MKKRIRSSYKVGSSNKYHKKNYTDNEKDKK). Over residues 21-30 (NYTDNEKDKK) the composition is skewed to basic and acidic residues. ATP-binding positions include 245–253 (IGQGGFGSV) and Lys270. Disordered stretches follow at residues 409–493 (FYSD…NDEG), 572–609 (RNEDDKNGLDGDKNGLDGDKNGLDGDKNGLDGDKNELD), and 742–800 (ENDD…DDDI). A compositionally biased stretch (basic and acidic residues) spans 419-428 (KNKENPEKNH). Residues 455-477 (HKLKKRKNKKKKSKKKRKSKSKI) are compositionally biased toward basic residues. A run of 5 repeats spans residues 576–582 (DKNGLDG), 583–589 (DKNGLDG), 590–596 (DKNGLDG), 597–603 (DKNGLDG), and 604–610 (DKNELDD). The 5 X 7 AA tandem repeat of D-K-N-[GE]-L-D-[GD] stretch occupies residues 576-610 (DKNGLDGDKNGLDGDKNGLDGDKNGLDGDKNELDD). The Protein kinase domain occupies 678–1049 (TNVESINTNG…KIKVLLDPHL (372 aa)). Positions 743–754 (NDDDDDDDDDDN) are enriched in acidic residues. Asp886 (proton acceptor) is an active-site residue. At Thr953 the chain carries Phosphothreonine.

The protein belongs to the protein kinase superfamily. Ser/Thr protein kinase family. GCN2 subfamily. In terms of assembly, may form oligomers in response to stress; oligomerization may result in catalytic activity. Interacts with BIP; the interaction is disrupted in response to stress. In terms of processing, auto-phosphorylated.

It localises to the endoplasmic reticulum membrane. It catalyses the reaction L-seryl-[protein] + ATP = O-phospho-L-seryl-[protein] + ADP + H(+). It carries out the reaction L-threonyl-[protein] + ATP = O-phospho-L-threonyl-[protein] + ADP + H(+). Dissociation from BIP and oligomerization, may results autophosphorylation and kinase activity induction. Its function is as follows. During the asexual blood stage, phosphorylates translation factor eIF2alpha in late schizonts resulting in protein translation inhibition. Plays a role in trophozoite differentiation into schizonts. This chain is Eukaryotic translation initiation factor 2-alpha kinase PK4, found in Plasmodium falciparum.